Reading from the N-terminus, the 217-residue chain is GTP cyclohydrolase 1 (217 aa).

Positions 109, 112, and 180 each coordinate Zn(2+).

Belongs to the GTP cyclohydrolase I family. In terms of assembly, toroid-shaped homodecamer, composed of two pentamers of five dimers.

The catalysed reaction is GTP + H2O = 7,8-dihydroneopterin 3'-triphosphate + formate + H(+). It functions in the pathway cofactor biosynthesis; 7,8-dihydroneopterin triphosphate biosynthesis; 7,8-dihydroneopterin triphosphate from GTP: step 1/1. The chain is GTP cyclohydrolase 1 from Vibrio parahaemolyticus serotype O3:K6 (strain RIMD 2210633).